A 205-amino-acid chain; its full sequence is High frequency lysogenization protein HflD homolog (205 aa).

The protein belongs to the HflD family.

Its subcellular location is the cytoplasm. The protein resides in the cell inner membrane. The protein is High frequency lysogenization protein HflD homolog of Shewanella sp. (strain MR-7).